Consider the following 131-residue polypeptide: Putative protein PTGES3L (131 aa).

Residues 3–91 enclose the CS domain; that stretch reads RQPARTLWYD…KEKVAWPRLT (89 aa).

It belongs to the p23/wos2 family.

This Mus musculus (Mouse) protein is Putative protein PTGES3L (Ptges3l).